The primary structure comprises 720 residues: Long chain acyl-CoA synthetase 8 (720 aa).

Position 1 is an N-acetylmethionine (M1). 279-290 (IMFTSGSTGLPK) contacts ATP. Residues 554–582 (DEKGTRWFYTGDIGRFHPDGCLEVIDRKK) form a fatty acid-binding region.

The protein belongs to the ATP-dependent AMP-binding enzyme family. The cofactor is Mg(2+).

It carries out the reaction a long-chain fatty acid + ATP + CoA = a long-chain fatty acyl-CoA + AMP + diphosphate. Its pathway is lipid metabolism; fatty acid metabolism. In terms of biological role, activation of long-chain fatty acids for both synthesis of cellular lipids, and degradation via beta-oxidation. Preferentially uses palmitate, palmitoleate, oleate and linoleate. This Arabidopsis thaliana (Mouse-ear cress) protein is Long chain acyl-CoA synthetase 8 (LACS8).